A 224-amino-acid polypeptide reads, in one-letter code: N-(5'-phosphoribosyl)anthranilate isomerase (224 aa).

Belongs to the TrpF family.

The enzyme catalyses N-(5-phospho-beta-D-ribosyl)anthranilate = 1-(2-carboxyphenylamino)-1-deoxy-D-ribulose 5-phosphate. It functions in the pathway amino-acid biosynthesis; L-tryptophan biosynthesis; L-tryptophan from chorismate: step 3/5. The polypeptide is N-(5'-phosphoribosyl)anthranilate isomerase (Sinorhizobium fredii (strain NBRC 101917 / NGR234)).